We begin with the raw amino-acid sequence, 762 residues long: PHD finger protein 20-like protein 1 (762 aa).

Tudor domains follow at residues isoleucine 11–proline 71 and valine 85–lysine 141. 5 disordered regions span residues alanine 178–aspartate 231, alanine 289–proline 359, serine 383–arginine 411, serine 536–glutamate 559, and leucine 613–tyrosine 651. Basic and acidic residues predominate over residues asparagine 193–threonine 211. Composition is skewed to polar residues over residues aspartate 319–lysine 340 and serine 383–arginine 398. Residues serine 399–glutamine 410 show a composition bias toward basic residues. Residues serine 614 to histidine 632 show a composition bias toward basic and acidic residues. Residues lysine 633–lysine 647 are compositionally biased toward basic residues.

The protein localises to the nucleus. Its function is as follows. Is a negative regulator of proteasomal degradation of methylated proteins. Involved in the maintainance of pluripotency of embryonic stem cells. In Gallus gallus (Chicken), this protein is PHD finger protein 20-like protein 1 (PHF20L1).